The following is a 790-amino-acid chain: Phenylalanine--tRNA ligase beta subunit (790 aa).

One can recognise a tRNA-binding domain in the interval 39–154 (PDSLNTVVTG…ADTPLGESAC (116 aa)). Positions 404 to 483 (FSPLSLSVRP…FVQKTQKILP (80 aa)) constitute a B5 domain. Mg(2+)-binding residues include D457, D463, E466, and E467. The 97-residue stretch at 694–790 (PIYPASSRDI…KLANIGQGNS (97 aa)) folds into the FDX-ACB domain.

The protein belongs to the phenylalanyl-tRNA synthetase beta subunit family. Type 1 subfamily. In terms of assembly, tetramer of two alpha and two beta subunits. Mg(2+) serves as cofactor.

The protein resides in the cytoplasm. The enzyme catalyses tRNA(Phe) + L-phenylalanine + ATP = L-phenylalanyl-tRNA(Phe) + AMP + diphosphate + H(+). This chain is Phenylalanine--tRNA ligase beta subunit, found in Chlamydia trachomatis serovar A (strain ATCC VR-571B / DSM 19440 / HAR-13).